The sequence spans 224 residues: UPF0441 protein PC1_0312 (224 aa).

Positions 178–224 (PKTALAPKPATTSTITRGGFGETVAKQNSMQRSSASSSSSSSRSMGG) are disordered. A compositionally biased stretch (low complexity) spans 209-224 (RSSASSSSSSSRSMGG).

The protein belongs to the UPF0441 family.

This chain is UPF0441 protein PC1_0312, found in Pectobacterium carotovorum subsp. carotovorum (strain PC1).